The primary structure comprises 171 residues: MDSPSLEKDGFLLTTLDGLFGRAQSGSLWYLSFGLACCAVEMMHAAAARYDMDRFGWIPRATPRQADLMIVAGTLTNKMAPAMRKVYDQMSEPRYVLSMGSCANGGGYYHYSYAVVRGCDRIVPVDVYVPGCPPTAEALLYGLMQLQAKIRRDDTASRRELLDRSPNRQPN.

4 residues coordinate [4Fe-4S] cluster: C37, C38, C102, and C132.

Belongs to the complex I 20 kDa subunit family. As to quaternary structure, NDH-1 is composed of 14 different subunits. Subunits NuoB, C, D, E, F, and G constitute the peripheral sector of the complex. [4Fe-4S] cluster serves as cofactor.

The protein resides in the cell inner membrane. The catalysed reaction is a quinone + NADH + 5 H(+)(in) = a quinol + NAD(+) + 4 H(+)(out). NDH-1 shuttles electrons from NADH, via FMN and iron-sulfur (Fe-S) centers, to quinones in the respiratory chain. Couples the redox reaction to proton translocation (for every two electrons transferred, four hydrogen ions are translocated across the cytoplasmic membrane), and thus conserves the redox energy in a proton gradient. This is NADH-quinone oxidoreductase subunit B 2 from Chromobacterium violaceum (strain ATCC 12472 / DSM 30191 / JCM 1249 / CCUG 213 / NBRC 12614 / NCIMB 9131 / NCTC 9757 / MK).